A 332-amino-acid polypeptide reads, in one-letter code: Apoptosis-enhancing nuclease (332 aa).

The tract at residues 1 to 102 (MVPREVPESS…VPREAPSSGP (102 aa)) is disordered. The span at 20-36 (ARRRHKRRSRQHQRFMA) shows a compositional bias: basic residues. The Nucleolar localization signal signature appears at 21-29 (RRRHKRRSR). The span at 63–73 (QTPAGTEASGN) shows a compositional bias: polar residues. Residues 105–261 (YVAIDCEMVG…EDAMTAMELY (157 aa)) form the Exonuclease domain. The Nuclear localization signal motif lies at 160–183 (RQHMHKAIPFQVAQKEILKLLKGK). Residues 272-332 (VASTAKAHPE…EGQGARSAPP (61 aa)) are disordered. Residues 310-321 (GDTREAQDRQEG) show a composition bias toward basic and acidic residues.

The protein resides in the nucleus. It localises to the nucleolus. Exonuclease with activity against single- and double-stranded DNA and RNA. Mediates p53-induced apoptosis. When induced by p53 following DNA damage, digests double-stranded DNA to form single-stranded DNA and amplifies DNA damage signals, leading to enhancement of apoptosis. The polypeptide is Apoptosis-enhancing nuclease (Rattus norvegicus (Rat)).